Consider the following 188-residue polypeptide: Elongation factor P-like protein (188 aa).

It belongs to the elongation factor P family.

This is Elongation factor P-like protein from Saccharophagus degradans (strain 2-40 / ATCC 43961 / DSM 17024).